We begin with the raw amino-acid sequence, 209 residues long: Adenylate kinase (209 aa).

59–64 (GSGKRT) contributes to the ATP binding site. The NMP stretch occupies residues 79-108 (SSGQVLTRGVESGSETSQLAHSYVSRGERV). AMP contacts are provided by residues serine 80, 106–108 (ERV), 135–138 (GYPR), and glutamine 142. The LID stretch occupies residues 172–205 (HRRYDPATNKXYHMLDNPPPGGRCRVMRTAPAEG). Arginine 173 lines the ATP pocket.

The protein belongs to the adenylate kinase family. Monomer.

It is found in the cytoplasm. It catalyses the reaction AMP + ATP = 2 ADP. Functionally, catalyzes the reversible transfer of the terminal phosphate group between ATP and AMP. Plays an important role in cellular energy homeostasis and in adenine nucleotide metabolism. This Trypanosoma brucei rhodesiense protein is Adenylate kinase.